A 460-amino-acid polypeptide reads, in one-letter code: Cyclic 2,3-diphosphoglycerate synthetase (460 aa).

Homodimer.

Its subcellular location is the cytoplasm. It carries out the reaction (2R)-2,3-bisphosphoglycerate + ATP + H(+) = cyclic (2R)-2,3-bisphosphoglycerate + ADP + phosphate. Its function is as follows. Catalyzes the formation of cyclic 2,3-diphosphoglycerate (cDPG) by formation of an intramolecular phosphoanhydride bond at the expense of ATP. It is also able to catalyze the hydrolysis of cDPG but with significant slower rates (8-10 times). May be involved in thermoadaptation. In Methanothermus fervidus (strain ATCC 43054 / DSM 2088 / JCM 10308 / V24 S), this protein is Cyclic 2,3-diphosphoglycerate synthetase (cpgS).